The chain runs to 53 residues: MFRWGIIFLIIALIAAALGFGGLAGTAAWAAKVVFVVGIILFLISLFTGRKRL.

2 consecutive transmembrane segments (helical) span residues 4-24 (WGIIFLIIALIAAALGFGGLA) and 27-47 (AAWAAKVVFVVGIILFLISLF).

The protein belongs to the UPF0391 family.

Its subcellular location is the cell membrane. The protein is UPF0391 membrane protein YPTS_0599 of Yersinia pseudotuberculosis serotype IB (strain PB1/+).